The chain runs to 488 residues: Inositol 1,3,4-trisphosphate 5/6-kinase 4 (488 aa).

1D-myo-inositol 1,3,4-trisphosphate contacts are provided by K208 and K224. The region spanning 246–488 (NACAIVDPIR…RFDQHVQEKH (243 aa)) is the ATP-grasp domain. Residues R263 and K315 each coordinate ATP. The 1D-myo-inositol 1,3,4-trisphosphate site is built by H326 and K360. ATP is bound by residues 349-360 (QEYVDHSSRIFK), S375, and S398. D439, D453, and N455 together coordinate Mg(2+). Positions 455 and 459 each coordinate 1D-myo-inositol 1,3,4-trisphosphate.

Belongs to the ITPK1 family. Monomer. Mg(2+) is required as a cofactor. In terms of tissue distribution, expressed in roots, leaf vasculature, cauline leaves, flower buds and siliques.

The catalysed reaction is 1D-myo-inositol 1,3,4-trisphosphate + ATP = 1D-myo-inositol 1,3,4,5-tetrakisphosphate + ADP + H(+). It catalyses the reaction 1D-myo-inositol 1,3,4-trisphosphate + ATP = 1D-myo-inositol 1,3,4,6-tetrakisphosphate + ADP + H(+). Functionally, kinase that can phosphorylate the inositol polyphosphate Ins(1,3,4)P3 to form InsP4. Also phosphorylates a racemic mixture of Ins(1,4,6)P3 and Ins(3,4,6)P3 to form InsP4. Does not display inositol 3,4,5,6-tetrakisphosphate 1-kinase activity, but possesses inositol 1,4,5,6-tetrakisphosphate and inositol 1,3,4,5-tetrakisphosphate isomerase activity. Ins(1,3,4,6)P4 is an essential molecule in the hexakisphosphate (InsP6) pathway. In Arabidopsis thaliana (Mouse-ear cress), this protein is Inositol 1,3,4-trisphosphate 5/6-kinase 4 (ITPK4).